A 300-amino-acid polypeptide reads, in one-letter code: Protoheme IX farnesyltransferase (300 aa).

9 helical membrane-spanning segments follow: residues 24 to 44 (VTQLAVFCAVIGMFLATPGMV), 46 to 66 (WHVLIGGTVGIWLLAGAAFAI), 94 to 114 (PQILLFSAVLGSVGAWTLYTF), 118 to 138 (LTMWLTIATFVGYAVIYTLLL), 146 to 166 (IVIGGASGAMPPALGWAAVTG), 172 to 192 (AWILVLIIFVWTPPHFWVLAL), 217 to 237 (LHILLYTVILFAVTLMPFISG), 239 to 259 (SGAVYLTSAVLLGAVFLAYAW), and 278 to 298 (IVYLSLLFAALLVDHYARPLL).

It belongs to the UbiA prenyltransferase family. Protoheme IX farnesyltransferase subfamily.

It is found in the cell inner membrane. It carries out the reaction heme b + (2E,6E)-farnesyl diphosphate + H2O = Fe(II)-heme o + diphosphate. It participates in porphyrin-containing compound metabolism; heme O biosynthesis; heme O from protoheme: step 1/1. Converts heme B (protoheme IX) to heme O by substitution of the vinyl group on carbon 2 of heme B porphyrin ring with a hydroxyethyl farnesyl side group. The chain is Protoheme IX farnesyltransferase from Burkholderia cenocepacia (strain HI2424).